The primary structure comprises 1645 residues: Outer membrane protein B (1645 aa).

Residues 1329–1352 constitute a propeptide that is removed on maturation; the sequence is GALRYLSNSETADVGGSETGAVSS. Residues 1357-1645 form the Autotransporter domain; that stretch reads IDQVSYGVWA…QGTLKVRINF (289 aa).

This sequence belongs to the rickettsiae OmpA/OmpB family.

The protein resides in the periplasm. It is found in the secreted. Its subcellular location is the cell surface. The protein localises to the cell outer membrane. Its function is as follows. The 120 kDa surface-exposed protein is a major structural protein which may play a role as a rickettsial virulence factor and/or immunogen during infection. The 32 kDa beta peptide may serve as a membrane anchor. The polypeptide is Outer membrane protein B (ompB) (Rickettsia typhi (strain ATCC VR-144 / Wilmington)).